A 213-amino-acid chain; its full sequence is Regulatory protein RecX (213 aa).

Belongs to the RecX family.

It localises to the cytoplasm. Its function is as follows. Modulates RecA activity. In Clostridium beijerinckii (strain ATCC 51743 / NCIMB 8052) (Clostridium acetobutylicum), this protein is Regulatory protein RecX.